The primary structure comprises 199 residues: Putative peroxiredoxin ycf42 (199 aa).

Residues 8-165 (LRVGQLAPDF…TLRVLQAIQY (158 aa)) form the Thioredoxin domain. Cys53 functions as the Cysteine sulfenic acid (-SOH) intermediate in the catalytic mechanism.

This sequence belongs to the peroxiredoxin family. AhpC/Prx1 subfamily. As to quaternary structure, homodimer; disulfide-linked, upon oxidation. In terms of processing, the Cys-53-SH group is the primary site of oxidation by H(2)O(2), and the oxidized Cys-53 (probably Cys-SOH) rapidly reacts with Cys-174-SH of the other subunit to form an intermolecular disulfide. This disulfide is subsequently reduced by thioredoxin.

It localises to the plastid. The protein resides in the chloroplast. The enzyme catalyses a hydroperoxide + [thioredoxin]-dithiol = an alcohol + [thioredoxin]-disulfide + H2O. Functionally, thiol-specific peroxidase that catalyzes the reduction of hydrogen peroxide and organic hydroperoxides to water and alcohols, respectively. Plays a role in cell protection against oxidative stress by detoxifying peroxides. The chain is Putative peroxiredoxin ycf42 (ycf42) from Pyropia yezoensis (Susabi-nori).